Reading from the N-terminus, the 317-residue chain is 4-hydroxy-3-methylbut-2-enyl diphosphate reductase (317 aa).

[4Fe-4S] cluster is bound at residue cysteine 12. (2E)-4-hydroxy-3-methylbut-2-enyl diphosphate contacts are provided by histidine 41 and histidine 74. Dimethylallyl diphosphate is bound by residues histidine 41 and histidine 74. The isopentenyl diphosphate site is built by histidine 41 and histidine 74. Cysteine 97 is a binding site for [4Fe-4S] cluster. Histidine 125 is a binding site for (2E)-4-hydroxy-3-methylbut-2-enyl diphosphate. Histidine 125 serves as a coordination point for dimethylallyl diphosphate. Histidine 125 lines the isopentenyl diphosphate pocket. Catalysis depends on glutamate 127, which acts as the Proton donor. Position 168 (threonine 168) interacts with (2E)-4-hydroxy-3-methylbut-2-enyl diphosphate. Cysteine 198 lines the [4Fe-4S] cluster pocket. (2E)-4-hydroxy-3-methylbut-2-enyl diphosphate is bound by residues serine 226, serine 227, asparagine 228, and serine 270. Dimethylallyl diphosphate contacts are provided by serine 226, serine 227, asparagine 228, and serine 270. Positions 226, 227, 228, and 270 each coordinate isopentenyl diphosphate.

It belongs to the IspH family. In terms of assembly, homodimer. It depends on [4Fe-4S] cluster as a cofactor.

The catalysed reaction is isopentenyl diphosphate + 2 oxidized [2Fe-2S]-[ferredoxin] + H2O = (2E)-4-hydroxy-3-methylbut-2-enyl diphosphate + 2 reduced [2Fe-2S]-[ferredoxin] + 2 H(+). The enzyme catalyses dimethylallyl diphosphate + 2 oxidized [2Fe-2S]-[ferredoxin] + H2O = (2E)-4-hydroxy-3-methylbut-2-enyl diphosphate + 2 reduced [2Fe-2S]-[ferredoxin] + 2 H(+). It participates in isoprenoid biosynthesis; dimethylallyl diphosphate biosynthesis; dimethylallyl diphosphate from (2E)-4-hydroxy-3-methylbutenyl diphosphate: step 1/1. The protein operates within isoprenoid biosynthesis; isopentenyl diphosphate biosynthesis via DXP pathway; isopentenyl diphosphate from 1-deoxy-D-xylulose 5-phosphate: step 6/6. In terms of biological role, catalyzes the conversion of 1-hydroxy-2-methyl-2-(E)-butenyl 4-diphosphate (HMBPP) into a mixture of isopentenyl diphosphate (IPP) and dimethylallyl diphosphate (DMAPP). Acts in the terminal step of the DOXP/MEP pathway for isoprenoid precursor biosynthesis. This chain is 4-hydroxy-3-methylbut-2-enyl diphosphate reductase, found in Edwardsiella ictaluri (strain 93-146).